We begin with the raw amino-acid sequence, 123 residues long: Ragulator complex protein LAMTOR3-A (123 aa).

This sequence belongs to the LAMTOR3 family. Part of the Ragulator complex composed of lamtor1, lamtor2, lamtor3, lamtor4 and lamtor5. The Ragulator complex interacts with slc38a9; the probable amino acid sensor. Component of the lysosomal folliculin complex (LFC).

It localises to the late endosome membrane. Its function is as follows. As part of the Ragulator complex it is involved in amino acid sensing and activation of mTORC1, a signaling complex promoting cell growth in response to growth factors, energy levels, and amino acids. Activated by amino acids through a mechanism involving the lysosomal V-ATPase, the Ragulator plays a dual role for the small GTPases Rag (RagA/RRAGA, RagB/RRAGB, RagC/RRAGC and/or RagD/RRAGD): it (1) acts as a guanine nucleotide exchange factor (GEF), activating the small GTPases Rag and (2) mediates recruitment of Rag GTPases to the lysosome membrane. Activated Ragulator and Rag GTPases function as a scaffold recruiting mTORC1 to lysosomes where it is in turn activated. The sequence is that of Ragulator complex protein LAMTOR3-A (lamtor3-a) from Xenopus laevis (African clawed frog).